We begin with the raw amino-acid sequence, 762 residues long: Protein PHTF1 (762 aa).

The PHTF domain occupies arginine 6–isoleucine 150. A run of 3 helical transmembrane segments spans residues glycine 77–leucine 97, isoleucine 99–methionine 119, and proline 121–valine 141. Residues arginine 152–lysine 184 form a disordered region. N-linked (GlcNAc...) asparagine glycosylation is found at asparagine 179 and asparagine 180. Serine 272, serine 276, serine 277, serine 334, and serine 336 each carry phosphoserine. Disordered regions lie at residues serine 344–aspartate 380 and arginine 393–aspartate 415. Over residues serine 348–serine 361 the composition is skewed to low complexity. N-linked (GlcNAc...) asparagine glycosylation occurs at asparagine 363. Positions serine 365 to serine 376 are enriched in basic and acidic residues. Asparagine 431 carries an N-linked (GlcNAc...) asparagine glycan. The next 4 membrane-spanning stretches (helical) occupy residues glycine 473 to leucine 493, glutamate 512 to isoleucine 532, valine 611 to valine 631, and tryptophan 645 to glycine 665. 2 N-linked (GlcNAc...) asparagine glycosylation sites follow: asparagine 674 and asparagine 733. Residues valine 737 to leucine 757 traverse the membrane as a helical segment.

In terms of assembly, interacts with FEM1B. As to expression, widely expressed with highest levels in testis.

The protein localises to the endoplasmic reticulum membrane. It is found in the golgi apparatus. It localises to the cis-Golgi network membrane. The polypeptide is Protein PHTF1 (Homo sapiens (Human)).